Consider the following 943-residue polypeptide: MTDYKATLNLPETAFPMKAGLPQREPETLKFWNDIGLYQKLRAIGGDRPKFVLHDGPPYANGSIHIGHAVNKILKDIIVRSKTLAGYDAPYVPGWDCHGLPIEHKVETTHGKNLPADKTRELCREYAAEQIEGQKADFIRLGVLGEWDNPYKTMNFANEANEIRALAEMVKQDFVFKGLKPVNWCFDCGSALAEAEVEYADKKSPTIDVGFPVADADKLAAAFGLAALDKPAQIVIWTTTPWTIPANQALNVHPEIDYALVDAGDRYLVLAEALVESCLARYQREGKVVATAKGEALELINFRHPFYERLSPVYLADYVALDAGTGIVHSSPAYGEDDFYTCKRYGMSNDDILSPVQSNGVYVDSLPFFGGQFIWKANPNVVAKLEEVGSLLAHETINHSYMHCWRHKTPLIYRATAQWFVGMDKQPRQGASLRERALEAITQTEFVPGWGQARLHGMIAGRPDWCISRQRNWGVPIPFFLHKASGELHPRTVELMEEVAQRVEKEGIEAWFKLDAAELLGEDAAQYEKINDTLDVWFDSGTTHWHVLRGSHRIGHASGPVADLYLEGSDQHRGWFHSSLLTGCAIDNHAPYRQLLTHGFTVDESGRKMSKSLGNTVVPQTVIDTLGADILRLWVASTDYSGEIAVSQQILQRSADAYRRIRNTTRFLLSNLNGFDPATDLLPPQEMLALDRWAVDRALLLQREIEEAYREYRFWNVYSKVHNFCVQELGGFYLDIIKDRQYTTGANSVARRSCQTALFHIAEALVRWIAPILAFTAEEVWKFLPGERAESVMLATWYDGLSELPADVTLNRQYWEQVMAVKAAVNKELENQRAAKAVGGNLQAEVTLYAEDALQVQLAKLGNELRFVLITSTATLAPLSAAPADAVDSEVAGLKLKVVKSTHAKCGRCWHHREDVGQHAAHPDLCGRCIENIEGSGEVRHYA.

The 'HIGH' region motif lies at 58–68 (PYANGSIHIGH). E567 contributes to the L-isoleucyl-5'-AMP binding site. A 'KMSKS' region motif is present at residues 608–612 (KMSKS). K611 contacts ATP. Zn(2+)-binding residues include C906, C909, C926, and C929.

This sequence belongs to the class-I aminoacyl-tRNA synthetase family. IleS type 1 subfamily. Monomer. Zn(2+) serves as cofactor.

The protein localises to the cytoplasm. The catalysed reaction is tRNA(Ile) + L-isoleucine + ATP = L-isoleucyl-tRNA(Ile) + AMP + diphosphate. Its function is as follows. Catalyzes the attachment of isoleucine to tRNA(Ile). As IleRS can inadvertently accommodate and process structurally similar amino acids such as valine, to avoid such errors it has two additional distinct tRNA(Ile)-dependent editing activities. One activity is designated as 'pretransfer' editing and involves the hydrolysis of activated Val-AMP. The other activity is designated 'posttransfer' editing and involves deacylation of mischarged Val-tRNA(Ile). This is Isoleucine--tRNA ligase from Pseudomonas aeruginosa (strain LESB58).